The following is a 200-amino-acid chain: Glycerol-3-phosphate acyltransferase (200 aa).

5 consecutive transmembrane segments (helical) span residues Met1–Gly21, Gly53–Ala73, Trp81–Gly101, Met114–Ile134, and Ile139–Gly159.

This sequence belongs to the PlsY family. As to quaternary structure, probably interacts with PlsX.

It is found in the cell inner membrane. The enzyme catalyses an acyl phosphate + sn-glycerol 3-phosphate = a 1-acyl-sn-glycero-3-phosphate + phosphate. Its pathway is lipid metabolism; phospholipid metabolism. In terms of biological role, catalyzes the transfer of an acyl group from acyl-phosphate (acyl-PO(4)) to glycerol-3-phosphate (G3P) to form lysophosphatidic acid (LPA). This enzyme utilizes acyl-phosphate as fatty acyl donor, but not acyl-CoA or acyl-ACP. This chain is Glycerol-3-phosphate acyltransferase, found in Synechococcus sp. (strain CC9902).